We begin with the raw amino-acid sequence, 234 residues long: Serum amyloid P-component (234 aa).

Residues 1-22 form the signal peptide; sequence MDKLLSLLGVSILAGLLLEAFA. The region spanning 27–226 is the Pentraxin (PTX) domain; sequence TGKVFVFPRQ…YAVIRPRCVA (200 aa). A glycan (N-linked (GlcNAc...) asparagine) is linked at Asn-54. Cys-58 and Cys-117 are oxidised to a cystine. The Ca(2+) site is built by Asn-81, Glu-158, Gln-159, Asp-160, and Gln-170.

Belongs to the pentraxin family. In terms of assembly, homopentamer. Pentraxin (or pentaxin) have a discoid arrangement of 5 non-covalently bound subunits. It depends on Ca(2+) as a cofactor.

The protein localises to the secreted. The protein is Serum amyloid P-component (APCS) of Mesocricetus auratus (Golden hamster).